A 230-amino-acid chain; its full sequence is Enolase-phosphatase E1 (230 aa).

The protein belongs to the HAD-like hydrolase superfamily. MasA/MtnC family. In terms of assembly, monomer. The cofactor is Mg(2+).

The enzyme catalyses 5-methylsulfanyl-2,3-dioxopentyl phosphate + H2O = 1,2-dihydroxy-5-(methylsulfanyl)pent-1-en-3-one + phosphate. Its pathway is amino-acid biosynthesis; L-methionine biosynthesis via salvage pathway; L-methionine from S-methyl-5-thio-alpha-D-ribose 1-phosphate: step 3/6. The protein operates within amino-acid biosynthesis; L-methionine biosynthesis via salvage pathway; L-methionine from S-methyl-5-thio-alpha-D-ribose 1-phosphate: step 4/6. In terms of biological role, bifunctional enzyme that catalyzes the enolization of 2,3-diketo-5-methylthiopentyl-1-phosphate (DK-MTP-1-P) into the intermediate 2-hydroxy-3-keto-5-methylthiopentenyl-1-phosphate (HK-MTPenyl-1-P), which is then dephosphorylated to form the acireductone 1,2-dihydroxy-3-keto-5-methylthiopentene (DHK-MTPene). This is Enolase-phosphatase E1 from Bradyrhizobium sp. (strain BTAi1 / ATCC BAA-1182).